Consider the following 241-residue polypeptide: MSMLFYTLITALLIGIQAAPHTESNVPAGHAIPQAHWIKLQHSLDTVLRRAHSAPAGPIAARVAGQTHNITVDPKLFKKRRLRSPRVLFSTQPPPVAADTQDLDFEAGGASSFNRTHRSKRSSSHPVFHRGEFSVCDSISVWVGDKTTATDIKGKEVMVLGEVNINNSVFKQYFFETKCRDPNPVDSGCRGIDAKHWNSYCTTTHTFVKALTMDGKQAAWRFIRIDTACVCVLSRKTGQRA.

A signal peptide spans 1–18 (MSMLFYTLITALLIGIQA). A propeptide spanning residues 19 to 121 (APHTESNVPA…SFNRTHRSKR (103 aa)) is cleaved from the precursor. 3 disulfide bridges follow: Cys-136–Cys-201, Cys-179–Cys-229, and Cys-189–Cys-231. Asn-166 carries an N-linked (GlcNAc...) asparagine glycan. 2 residues coordinate a 1-acyl-sn-glycero-3-phospho-(1D-myo-inositol): Tyr-173 and Lys-209. Lys-209 serves as a coordination point for a 1-acyl-sn-glycero-3-phospho-L-serine.

The protein belongs to the NGF-beta family. In terms of assembly, homodimer. The homodimer interacts with a single NTRK1 chain. The homodimer interacts with a single NGFR chain. The NGF dimer interacts with a single SORCS2 chain (via extracellular domain). The NGF precursor (proNGF) binds to a receptor complex formed by SORT1 and NGFR, which leads to NGF endocytosis. Both mature NGF and the immature NGF precursor (proNGF) interact with SORCS2 and with the heterodimer formed by SORCS2 and NGFR (via extracellular domains). The NGF precursor (proNGF) has much higher affinity for SORCS2 than mature NGF. The NGF precursor (proNGF) has much higher affinity for SORT1 than mature NGF. Interacts with ADAM10 in a divalent cation-dependent manner. Interacts with SORCS3.

It localises to the secreted. The protein localises to the endosome lumen. Functionally, nerve growth factor is important for the development and maintenance of the sympathetic and sensory nervous systems. Extracellular ligand for the NTRK1 and NGFR receptors, activates cellular signaling cascades to regulate neuronal proliferation, differentiation and survival. The immature NGF precursor (proNGF) functions as a ligand for the heterodimeric receptor formed by SORCS2 and NGFR, and activates cellular signaling cascades that lead to inactivation of RAC1 and/or RAC2, reorganization of the actin cytoskeleton and neuronal growth cone collapse. In contrast to mature NGF, the precursor form (proNGF) promotes neuronal apoptosis (in vitro). Inhibits metalloproteinase-dependent proteolysis of platelet glycoprotein VI. Binds lysophosphatidylinositol and lysophosphatidylserine between the two chains of the homodimer. The lipid-bound form promotes histamine relase from mast cells, contrary to the lipid-free form. The protein is Beta-nerve growth factor (NGF) of Bos taurus (Bovine).